The following is a 512-amino-acid chain: UDP-N-acetylglucosamine--peptide N-acetylglucosaminyltransferase GtfA subunit (512 aa).

16–19 contacts UDP; that stretch reads GVEY. H251 is a binding site for N-acetyl-D-glucosamine. Residues 393–394 and 413–416 each bind UDP; these read QH and EGFG.

The protein belongs to the glycosyltransferase group 1 family. Glycosyltransferase 4 subfamily. As to quaternary structure, forms a heterotetramer with 2 subunits each of GtfA and GtfB. Part of the accessory SecA2/SecY2 protein translocation apparatus.

It is found in the cytoplasm. It localises to the cell membrane. The enzyme catalyses L-seryl-[protein] + UDP-N-acetyl-alpha-D-glucosamine = 3-O-[N-acetyl-alpha-D-glucosaminyl]-L-seryl-[protein] + UDP + H(+). The protein operates within protein modification; protein glycosylation. Required for polymorphic O-glycosylation of the serine-rich repeat protein (SRRP) in this bacteria. Catalyzes the first step in glycosylation by transferring N-acetylglucosamine from UDP-GlcNAc to serine residues in the substrate protein. Part of the accessory SecA2/SecY2 system specifically required to export serine-rich repeat cell wall proteins encoded in the same operon. The GtfA-GtfB complex adds GlcNAc from UDP-GlcNAc to SRRP (experimentally characterized with a truncated SSR1 construct); the alpha linkage was shown for this enzyme but not the residues glycosylated on SRRP. This Limosilactobacillus reuteri subsp. suis (strain ATCC 53608 / LMG 31752 / 1063) (Lactobacillus reuteri) protein is UDP-N-acetylglucosamine--peptide N-acetylglucosaminyltransferase GtfA subunit.